The sequence spans 680 residues: ATPase family AAA domain-containing protein FIGL1 (680 aa).

3 disordered regions span residues 214-234, 250-275, and 288-352; these read YGNSIGKPDNQRKTSVNNQDR, FGTKRPHAETSSLANDGEVKEDGAPN, and VRQK…GGKT. Over residues 295–308 the composition is skewed to polar residues; the sequence is TESPSSCLSPQSDK. Residues 313–323 are compositionally biased toward gly residues; it reads RGYGSRSGGLR. The segment covering 336-346 has biased composition (polar residues); the sequence is TNGNNVGNLTS. ATP-binding positions include A406 and 446-451; that span reads GTGKTM.

Belongs to the AAA ATPase family. The cofactor is Mg(2+).

The protein localises to the nucleus. The enzyme catalyses ATP + H2O = ADP + phosphate + H(+). Its function is as follows. Involved in DNA double-strand break (DBS) repair via homologous recombination (HR). Limits class II meiotic crossover (CO) formation by regulating the invasion step of meiotic HR. May counteract DMC1 and RAD51-mediated inter-homolog strand invasion to limit CO formation. Functions independently of FANCM. The sequence is that of ATPase family AAA domain-containing protein FIGL1 from Arabidopsis thaliana (Mouse-ear cress).